The chain runs to 188 residues: Transmembrane protein 160 (188 aa).

The transit peptide at 1 to 96 (MGGGWWWARA…ISFMQSDMGR (96 aa)) directs the protein to the mitochondrion. A disordered region spans residues 25–52 (PPRPRSGGARGSFAPGHGPRAGASPPPV). Positions 29–38 (RSGGARGSFA) are enriched in low complexity. Ser-48 carries the post-translational modification Phosphoserine. Helical transmembrane passes span 102 to 122 (FFLLGGLCVVWGGASYVVGLA) and 135 to 155 (AAAGVGAVLAAGLLWACAVGL).

The protein belongs to the TMEM160 family.

The protein localises to the mitochondrion inner membrane. In Bos taurus (Bovine), this protein is Transmembrane protein 160.